The primary structure comprises 139 residues: Large ribosomal subunit protein bL17 (139 aa).

The protein belongs to the bacterial ribosomal protein bL17 family. In terms of assembly, part of the 50S ribosomal subunit. Contacts protein L32.

The sequence is that of Large ribosomal subunit protein bL17 from Cereibacter sphaeroides (strain ATCC 17029 / ATH 2.4.9) (Rhodobacter sphaeroides).